A 284-amino-acid chain; its full sequence is Spermidine synthase (284 aa).

The PABS domain maps to 6–241 (NGWFSEISEF…GSIGFILCSL (236 aa)). Q37 is an S-adenosyl 3-(methylsulfanyl)propylamine binding site. Y67 lines the putrescine pocket. Residues Q68, D92, E112, 143–144 (DG), and D161 contribute to the S-adenosyl 3-(methylsulfanyl)propylamine site. D161 serves as the catalytic Proton acceptor. Residues 161 to 164 (DSSD) and Y229 each bind putrescine.

It belongs to the spermidine/spermine synthase family.

The catalysed reaction is S-adenosyl 3-(methylsulfanyl)propylamine + putrescine = S-methyl-5'-thioadenosine + spermidine + H(+). Its pathway is amine and polyamine biosynthesis; spermidine biosynthesis; spermidine from putrescine: step 1/1. Functionally, catalyzes the production of spermidine from putrescine and decarboxylated S-adenosylmethionine (dcSAM). Has a strong preference for putrescine as substrate. This chain is Spermidine synthase (spsA), found in Dictyostelium discoideum (Social amoeba).